The primary structure comprises 320 residues: Ferrochelatase (320 aa).

Residues histidine 194 and glutamate 275 each contribute to the Fe cation site.

It belongs to the ferrochelatase family.

It localises to the cytoplasm. It catalyses the reaction heme b + 2 H(+) = protoporphyrin IX + Fe(2+). Its pathway is porphyrin-containing compound metabolism; protoheme biosynthesis; protoheme from protoporphyrin-IX: step 1/1. In terms of biological role, catalyzes the ferrous insertion into protoporphyrin IX. In Serratia proteamaculans (strain 568), this protein is Ferrochelatase.